We begin with the raw amino-acid sequence, 192 residues long: Adenine phosphoribosyltransferase 2 (192 aa).

This sequence belongs to the purine/pyrimidine phosphoribosyltransferase family. As to quaternary structure, homodimer.

The protein localises to the cytoplasm. It catalyses the reaction AMP + diphosphate = 5-phospho-alpha-D-ribose 1-diphosphate + adenine. Its pathway is purine metabolism; AMP biosynthesis via salvage pathway; AMP from adenine: step 1/1. In terms of biological role, catalyzes a salvage reaction resulting in the formation of AMP, that is energically less costly than de novo synthesis. May contribute to the recycling of adenine into adenylate nucleotides and the inactivation of cytokinins by phosphoribosylation. Possesses low activity toward adenine and cytokinins. The polypeptide is Adenine phosphoribosyltransferase 2 (APT2) (Arabidopsis thaliana (Mouse-ear cress)).